We begin with the raw amino-acid sequence, 70 residues long: ATP synthase subunit c (70 aa).

The next 2 helical transmembrane spans lie at Ile4–Ile24 and Ile45–Phe65.

Belongs to the ATPase C chain family. As to quaternary structure, F-type ATPases have 2 components, F(1) - the catalytic core - and F(0) - the membrane proton channel. F(1) has five subunits: alpha(3), beta(3), gamma(1), delta(1), epsilon(1). F(0) has three main subunits: a(1), b(2) and c(10-14). The alpha and beta chains form an alternating ring which encloses part of the gamma chain. F(1) is attached to F(0) by a central stalk formed by the gamma and epsilon chains, while a peripheral stalk is formed by the delta and b chains.

The protein resides in the cell membrane. Its function is as follows. F(1)F(0) ATP synthase produces ATP from ADP in the presence of a proton or sodium gradient. F-type ATPases consist of two structural domains, F(1) containing the extramembraneous catalytic core and F(0) containing the membrane proton channel, linked together by a central stalk and a peripheral stalk. During catalysis, ATP synthesis in the catalytic domain of F(1) is coupled via a rotary mechanism of the central stalk subunits to proton translocation. In terms of biological role, key component of the F(0) channel; it plays a direct role in translocation across the membrane. A homomeric c-ring of between 10-14 subunits forms the central stalk rotor element with the F(1) delta and epsilon subunits. The chain is ATP synthase subunit c from Staphylococcus haemolyticus (strain JCSC1435).